A 460-amino-acid chain; its full sequence is Chromosomal replication initiator protein DnaA (460 aa).

The interval Met1–Ala84 is domain I, interacts with DnaA modulators. Residues Ala84–Ser123 are domain II. The interval Asn124–Ala340 is domain III, AAA+ region. The ATP site is built by Gly168, Gly170, Lys171, and Thr172. Positions Asn341–Ser460 are domain IV, binds dsDNA.

Belongs to the DnaA family. In terms of assembly, oligomerizes as a right-handed, spiral filament on DNA at oriC.

It localises to the cytoplasm. Functionally, plays an essential role in the initiation and regulation of chromosomal replication. ATP-DnaA binds to the origin of replication (oriC) to initiate formation of the DNA replication initiation complex once per cell cycle. Binds the DnaA box (a 9 base pair repeat at the origin) and separates the double-stranded (ds)DNA. Forms a right-handed helical filament on oriC DNA; dsDNA binds to the exterior of the filament while single-stranded (ss)DNA is stabiized in the filament's interior. The ATP-DnaA-oriC complex binds and stabilizes one strand of the AT-rich DNA unwinding element (DUE), permitting loading of DNA polymerase. After initiation quickly degrades to an ADP-DnaA complex that is not apt for DNA replication. Binds acidic phospholipids. In Shewanella oneidensis (strain ATCC 700550 / JCM 31522 / CIP 106686 / LMG 19005 / NCIMB 14063 / MR-1), this protein is Chromosomal replication initiator protein DnaA.